A 467-amino-acid polypeptide reads, in one-letter code: 3-isopropylmalate dehydratase large subunit (467 aa).

Cysteine 347, cysteine 408, and cysteine 411 together coordinate [4Fe-4S] cluster.

This sequence belongs to the aconitase/IPM isomerase family. LeuC type 1 subfamily. In terms of assembly, heterodimer of LeuC and LeuD. [4Fe-4S] cluster serves as cofactor.

The catalysed reaction is (2R,3S)-3-isopropylmalate = (2S)-2-isopropylmalate. It functions in the pathway amino-acid biosynthesis; L-leucine biosynthesis; L-leucine from 3-methyl-2-oxobutanoate: step 2/4. In terms of biological role, catalyzes the isomerization between 2-isopropylmalate and 3-isopropylmalate, via the formation of 2-isopropylmaleate. This Bordetella bronchiseptica (strain ATCC BAA-588 / NCTC 13252 / RB50) (Alcaligenes bronchisepticus) protein is 3-isopropylmalate dehydratase large subunit.